A 667-amino-acid chain; its full sequence is Transketolase (667 aa).

Histidine 27 is a substrate binding site. Thiamine diphosphate-binding positions include histidine 67 and 115–117 (GPL). Aspartate 156 contacts Mg(2+). Thiamine diphosphate contacts are provided by glycine 157 and asparagine 186. Mg(2+)-binding residues include asparagine 186 and isoleucine 188. Residues histidine 262, arginine 357, and serine 384 each contribute to the substrate site. Histidine 262 lines the thiamine diphosphate pocket. Glutamate 411 functions as the Proton donor in the catalytic mechanism. Phenylalanine 437 serves as a coordination point for thiamine diphosphate. 3 residues coordinate substrate: histidine 461, aspartate 469, and arginine 520.

The protein belongs to the transketolase family. In terms of assembly, homodimer. The cofactor is Mg(2+). Ca(2+) serves as cofactor. Requires Mn(2+) as cofactor. It depends on Co(2+) as a cofactor. Thiamine diphosphate is required as a cofactor.

It carries out the reaction D-sedoheptulose 7-phosphate + D-glyceraldehyde 3-phosphate = aldehydo-D-ribose 5-phosphate + D-xylulose 5-phosphate. In terms of biological role, catalyzes the transfer of a two-carbon ketol group from a ketose donor to an aldose acceptor, via a covalent intermediate with the cofactor thiamine pyrophosphate. The chain is Transketolase (tkt) from Bacillus subtilis (strain 168).